The chain runs to 1067 residues: MFRSRSWFGGPWGGRPKNRLSLEHLKYLYSILEKNTTVSESNRGLLVESLRCIAEILIWGDQHDSLVFDFFLEKNMLSYFLHIMRQKSGGSSFVCVQLLQTLNILFENIRNETSLYYLLSNNHVNSIMVHKFDFSDEDVMGYYILFLKTLSLKLNTHTIHFFYNEHTNDFPLYTEAIKFFNHPESMVRIAVRTISLNVYKVQNPSMLRFIRDKTAAPYFSNLVWFIGKHILELDTCVRTDIDHQSNQKLSNLVAEHLDHLHYLSDILLLEIKDLNAVLTEHLLHKLFVPLYIFSLTPAPPPPSLAVVTQNLAAVLNRNVDIDIQEMHNPRVSSIVALFLLSLVFLVVSHAPLVHALAWVILNGDHSVFKEGAAEILNSYVEHREVVVPGFGEPDESLEQALDTVTGQSSSSSYALSEDSGVESSSPATTELDSQADAVEAEQIKLRNITDEEKQLLQKSSSSTKADFAEMAKPFLDTVLHALDCTENDYLALLSLCLIYAMSHNRGIKNEWFEQVLAKSTRGAFSYKTALIEHLLNIITQSSQPSSRIRLITVEIALELLVTFTRPSSDDSRCITAAQQDLLFSARNQSMVVIRNFYKSEDIFLDLFEDEYNEMRKAQLNVEFLCMDSTILLPPTGTPLTGINFTRRLPCGEVEKARRAIRVYFLLRRTCQKFLNEKESLLPLTNVVNLVQVENVLDLNNSDLIACTVVAKDSSKQRRFLVIDALQLILVEPDAKLLGWGVAKFVGFLQDVEVQGDKDDSRCLHITVHRGGVTHNRTPLLSAKFLFDDHIRCMAAKQRLTKGRSKARQKKMYQIAQLIEIPGQMDSPVYAVGGTMVASSSGGSGNSSGSSSRSSHHRPMFSTANRVPGFAAVLRGSNSAGVSRTQMAPNRSIEGIRNESAGRSRRRSPSSTSGSNLRADHSDRERSPSVSMGSHSSSQSRENSQPRSTGNRSRESSPRMPRPRSEEIPLEDFQHSRNNSPHSRGNPSPASRSHTPIRVLHYDQLSGHSGSPREASLGGTNALLSQLNGLNREVLPTQSSEETSFIGSDGNEATGGSEGRRRGAIETV.

An FPL domain is found at 50 to 199; that stretch reads LRCIAEILIW…AVRTISLNVY (150 aa). A helical transmembrane segment spans residues 333–353; it reads SIVALFLLSLVFLVVSHAPLV. Over residues 409–418 the composition is skewed to low complexity; it reads SSSSYALSED. 4 disordered regions span residues 409–434, 837–861, 876–993, and 1037–1067; these read SSSS…LDSQ, ASSS…PMFS, SNSA…SRSH, and QSSE…IETV. The segment covering 421-432 has biased composition (polar residues); the sequence is VESSSPATTELD. Residues 876–888 are compositionally biased toward polar residues; it reads SNSAGVSRTQMAP. Basic and acidic residues predominate over residues 917-926; it reads RADHSDRERS. The segment covering 927 to 947 has biased composition (low complexity); the sequence is PSVSMGSHSSSQSRENSQPRS. The span at 951–974 shows a compositional bias: basic and acidic residues; it reads RSRESSPRMPRPRSEEIPLEDFQH. Positions 975–993 are enriched in polar residues; sequence SRNNSPHSRGNPSPASRSH. Residues 1057-1067 are compositionally biased toward basic and acidic residues; the sequence is EGRRRGAIETV.

This sequence belongs to the CLEC16A/gop-1 family. In terms of assembly, interacts with the class C Vps-HOPS complex components; Car, Dor and Vps16a.

It localises to the cytoplasmic vesicle. Its subcellular location is the autophagosome membrane. The protein resides in the late endosome membrane. It is found in the golgi apparatus membrane. Functionally, required for mitophagy, autophagy and endosome maturation, possibly by acting in multiple membrane trafficking pathways. Required for endosome trafficking and maturation. Functions with the class C Vps-HOPS complex member Vps16a to promote endosomal maturation into degradative late endosomes and lysosomes. In response to starvation, functions at an early stage of autophagy to promote autophagosome growth and efficient autophagy. Essential for the recruitment of lva-positive Golgi elements to autophagosomes. Likely to function by promoting membrane traffic from the Golgi complex to the developing autophagosomes. Also regulates synaptic growth at the neuromuscular junctions (NMJ) by down-regulating BMP signaling. This chain is Protein CLEC16A homolog, found in Drosophila melanogaster (Fruit fly).